The chain runs to 116 residues: Large ribosomal subunit protein bL17 (116 aa).

It belongs to the bacterial ribosomal protein bL17 family. In terms of assembly, part of the 50S ribosomal subunit. Contacts protein L32.

The protein is Large ribosomal subunit protein bL17 of Synechococcus sp. (strain RCC307).